A 119-amino-acid chain; its full sequence is Large ribosomal subunit protein uL14 (119 aa).

Belongs to the universal ribosomal protein uL14 family. As to quaternary structure, part of the 50S ribosomal subunit. Forms a cluster with proteins L3 and L19. In the 70S ribosome, L14 and L19 interact and together make contacts with the 16S rRNA in bridges B5 and B8.

Binds to 23S rRNA. Forms part of two intersubunit bridges in the 70S ribosome. This chain is Large ribosomal subunit protein uL14, found in Wolbachia sp. subsp. Brugia malayi (strain TRS).